Here is a 201-residue protein sequence, read N- to C-terminus: MSRYRGPRFKKIRRLGALPGLTSKRPKAGSDLRNQSRSGKKSQYRIRLEEKQKLRFHYGLTERQLLKYVRIAGKAKGSTGQVLLQLLEMRLDNILFRLGMALTIPQARQLVNHGHILVNGRIVDIPSYRCKPRDIITVKDEQNSRTLVQNLLDSSAPEELPNHLTLHTFQYEGLVNQIIDRKCVGLKINELLVVEYYSRQT.

The tract at residues 20–44 is disordered; sequence GLTSKRPKAGSDLRNQSRSGKKSQY. Positions 89 to 152 constitute an S4 RNA-binding domain; the sequence is MRLDNILFRL…NSRTLVQNLL (64 aa).

It belongs to the universal ribosomal protein uS4 family. As to quaternary structure, part of the 30S ribosomal subunit. Contacts protein S5. The interaction surface between S4 and S5 is involved in control of translational fidelity.

It localises to the plastid. The protein localises to the chloroplast. In terms of biological role, one of the primary rRNA binding proteins, it binds directly to 16S rRNA where it nucleates assembly of the body of the 30S subunit. Functionally, with S5 and S12 plays an important role in translational accuracy. This Barbarea verna (Land cress) protein is Small ribosomal subunit protein uS4c (rps4).